Here is a 546-residue protein sequence, read N- to C-terminus: ATP synthase F(1) complex catalytic subunit beta, mitochondrial (546 aa).

The N-terminal 45 residues, 1–45 (MLGFVGRVAATSASGALRGLGPSPLPQVKVLLRASPAALQSARDY), are a transit peptide targeting the mitochondrion. K123, K132, and K160 each carry N6-acetyllysine; alternate. 3 positions are modified to N6-succinyllysine; alternate: K123, K132, and K160. An N6-acetyllysine modification is found at K197. Residues G208, V209, G210, K211, T212, and V213 each contribute to the ADP site. An ATP-binding site is contributed by G208. Positions 208, 209, 210, 211, and 212 each coordinate phosphate. G210, K211, T212, and V213 together coordinate ATP. T212 lines the Mg(2+) pocket. E237 contributes to the Mg(2+) binding site. R238 contributes to the ATP binding site. 2 positions are modified to N6-acetyllysine; alternate: K258 and K263. An N6-succinyllysine; alternate mark is found at K258 and K263. T311 bears the Phosphothreonine mark. K425 is subject to N6-acetyllysine. S432 is subject to Phosphoserine. An N6-acetyllysine mark is found at K479 and K484. K521 bears the N6-acetyllysine; alternate mark. At K521 the chain carries N6-succinyllysine; alternate. The disordered stretch occupies residues 521 to 546 (KLAEEHSATQTSPSPKGAAAXXXRVV).

This sequence belongs to the ATPase alpha/beta chains family. In terms of assembly, homotrimer. Component of the ATP synthase complex composed at least of ATP5F1A/subunit alpha, ATP5F1B/subunit beta, ATP5MC1/subunit c (homooctomer), MT-ATP6/subunit a, MT-ATP8/subunit 8, ATP5ME/subunit e, ATP5MF/subunit f, ATP5MG/subunit g, ATP5MK/subunit k, ATP5MJ/subunit j, ATP5F1C/subunit gamma, ATP5F1D/subunit delta, ATP5F1E/subunit epsilon, ATP5PF/subunit F6, ATP5PB/subunit b, ATP5PD/subunit d, ATP5PO/subunit OSCP. ATP synthase complex consists of a soluble F(1) head domain (subunits alpha(3) and beta(3)) - the catalytic core - and a membrane F(0) domain - the membrane proton channel (subunits c, a, 8, e, f, g, k and j). These two domains are linked by a central stalk (subunits gamma, delta, and epsilon) rotating inside the F1 region and a stationary peripheral stalk (subunits F6, b, d, and OSCP). Interacts with PPIF. Interacts with BCL2L1 isoform BCL-X(L); the interaction mediates the association of BCL2L1 isoform BCL-X(L) with the mitochondrial membrane F(1)F(0) ATP synthase and enhances neurons metabolic efficiency. Interacts with CLN5 and PPT1. Interacts with S100A1; this interaction increases F1-ATPase activity. Interacts with MTLN. Interacts with TTC5/STRAP; the interaction results in decreased mitochondrial ATP production.

The protein localises to the mitochondrion inner membrane. The enzyme catalyses ATP + H2O + 4 H(+)(in) = ADP + phosphate + 5 H(+)(out). Functionally, catalytic subunit beta, of the mitochondrial membrane ATP synthase complex (F(1)F(0) ATP synthase or Complex V) that produces ATP from ADP in the presence of a proton gradient across the membrane which is generated by electron transport complexes of the respiratory chain. ATP synthase complex consist of a soluble F(1) head domain - the catalytic core - and a membrane F(1) domain - the membrane proton channel. These two domains are linked by a central stalk rotating inside the F(1) region and a stationary peripheral stalk. During catalysis, ATP synthesis in the catalytic domain of F(1) is coupled via a rotary mechanism of the central stalk subunits to proton translocation. In vivo, can only synthesize ATP although its ATP hydrolase activity can be activated artificially in vitro. With the subunit alpha (ATP5F1A), forms the catalytic core in the F(1) domain. The protein is ATP synthase F(1) complex catalytic subunit beta, mitochondrial of Canis lupus familiaris (Dog).